The following is a 729-amino-acid chain: MADSVTIGQLEKLSVQCDKENQHVENKENNINSDNINLLEATKTTLPIPNTSNTNPPMNQSSSPTTTTTTPTTTTTPTTAEPAKKRKIFAKLHLLNRDGSVKNYFEMKKTKLIIGSDTELADIQVVRPGIYPKHVEIIYDKEKKKFYLNPLIDPKDSDNVRLNFVPFLHKKEVLGNGDIISIGFRSIKMEFIEKVTVDQLVQPEKQYIPSNTPTCITNTPIQTPPTTSPPSSTTTNKKDNTSTNVTKKPIATVPSTTTSTKKSSVVPESKPATKTITKETPKPTKTTTTTTVTTSKPTVKPTAVKKSINDDDYGDDYNEEEDDDDEEEEEEEEEEEEEEEVESKQIKVVNSKPNDDDMSCKKPMKYTNTNEEMRKSLASNVGGINSKIISKGDSVRNLLPISSRRPTAPVTPTKPTSTKKVTTPKKATVVKPPKESKVPKVPKVPKVPKAAVVASIDENGKEDYIRLISFKKAKDIVKAFQSHEKLVKSKNNGHGNISNEKKEILKCFEVLDQINWRLSTDKPGDSRPISSYFKNIPSLSEFDSELLTDYYSMISEPMSINSILSSVIYTADYNIDNCLDDFNQVLENSMTYNSENSIIYWLAHYCKIELYKALSNSGIIQNKLYLDIKKDSETFLKSIGTQLKGDGISLPQIIAQSVSKNKEQTVPQEEDEEEEEEEEEEEEEEEEGEEGKEDEEEEEKEEEEGEENEEEEDVEIDDCEIDQESDDDQ.

Over residues 46–79 (LPIPNTSNTNPPMNQSSSPTTTTTTPTTTTTPTT) the composition is skewed to low complexity. Positions 46–83 (LPIPNTSNTNPPMNQSSSPTTTTTTPTTTTTPTTAEPA) are disordered. The region spanning 112–167 (LIIGSDTELADIQVVRPGIYPKHVEIIYDKEKKKFYLNPLIDPKDSDNVRLNFVPF) is the FHA domain. 3 stretches are compositionally biased toward low complexity: residues 208–221 (IPSN…NTPI), 229–275 (PPSS…ATKT), and 283–306 (PTKT…AVKK). 2 disordered regions span residues 208-361 (IPSN…MSCK) and 403-442 (SRRP…PKVP). Positions 310–341 (DDDYGDDYNEEEDDDDEEEEEEEEEEEEEEEV) are enriched in acidic residues. A coiled-coil region spans residues 315–352 (DDYNEEEDDDDEEEEEEEEEEEEEEEVESKQIKVVNSK). The span at 406–431 (PTAPVTPTKPTSTKKVTTPKKATVVK) shows a compositional bias: low complexity. A Bromo domain is found at 498–617 (SNEKKEILKC…IELYKALSNS (120 aa)). The stretch at 659 to 718 (SKNKEQTVPQEEDEEEEEEEEEEEEEEEEGEEGKEDEEEEEKEEEEGEENEEEEDVEIDD) forms a coiled coil. Residues 659–729 (SKNKEQTVPQ…EIDQESDDDQ (71 aa)) form a disordered region. Residues 668 to 729 (QEEDEEEEEE…EIDQESDDDQ (62 aa)) are compositionally biased toward acidic residues.

This chain is Bromo and FHA domain-containing protein DDB_G0267958, found in Dictyostelium discoideum (Social amoeba).